Consider the following 330-residue polypeptide: Spondin-2 (330 aa).

Residues 1–25 form the signal peptide; the sequence is MENVSFSLDRTLWVFLLAMLGSTAG. Residues 30 to 220 form the Spondin domain; it reads GESVCTARPL…EITASSPSHP (191 aa). A disulfide bridge connects residues cysteine 34 and cysteine 170. An a divalent metal cation-binding site is contributed by glutamate 140. Ca(2+) is bound by residues aspartate 159, aspartate 187, and aspartate 191. Positions 276-330 constitute a TSP type-1 domain; it reads DCEVSLWSSWGLCGGPCGKLGAKSRTRYVRVQPANNGTPCPELEEEAECAPDNCV. Residue tryptophan 282 is glycosylated (C-linked (Man) tryptophan).

As to quaternary structure, monomer. Interacts with integrin. In terms of tissue distribution, abundantly expressed in the developing hippocampus.

It is found in the secreted. The protein resides in the extracellular space. Its subcellular location is the extracellular matrix. Cell adhesion protein that promotes adhesion and outgrowth of hippocampal embryonic neurons. Binds directly to bacteria and their components and functions as an opsonin for macrophage phagocytosis of bacteria. Essential in the initiation of the innate immune response and represents a unique pattern-recognition molecule in the ECM for microbial pathogens. The protein is Spondin-2 (Spon2) of Rattus norvegicus (Rat).